We begin with the raw amino-acid sequence, 213 residues long: High frequency lysogenization protein HflD (213 aa).

The stretch at 99-126 (LSSAKGALDTLGNRINGLQRQLEHFDLQ) forms a coiled coil.

It belongs to the HflD family. In terms of assembly, interacts with CII protein from phage lambda.

It localises to the cytoplasm. It is found in the cell inner membrane. Its function is as follows. Negative regulator of phage lambda lysogenization. Contributes to the degradation of the phage regulatory protein CII. Acts probably by holding CII on the membrane surface, away from the target promoters, but close to the FtsH protease. The protein is High frequency lysogenization protein HflD of Escherichia coli O157:H7.